The primary structure comprises 84 residues: Exodeoxyribonuclease 7 small subunit (84 aa).

This sequence belongs to the XseB family. Heterooligomer composed of large and small subunits.

The protein localises to the cytoplasm. The catalysed reaction is Exonucleolytic cleavage in either 5'- to 3'- or 3'- to 5'-direction to yield nucleoside 5'-phosphates.. Functionally, bidirectionally degrades single-stranded DNA into large acid-insoluble oligonucleotides, which are then degraded further into small acid-soluble oligonucleotides. The chain is Exodeoxyribonuclease 7 small subunit from Yersinia pseudotuberculosis serotype O:1b (strain IP 31758).